Here is a 1185-residue protein sequence, read N- to C-terminus: DNA-directed RNA polymerase subunit beta' (1185 aa).

Positions 60, 62, 75, and 78 each coordinate Zn(2+). 3 residues coordinate Mg(2+): Asp449, Asp451, and Asp453. Zn(2+) contacts are provided by Cys774, Cys853, Cys860, and Cys863.

It belongs to the RNA polymerase beta' chain family. As to quaternary structure, the RNAP catalytic core consists of 2 alpha, 1 beta, 1 beta' and 1 omega subunit. When a sigma factor is associated with the core the holoenzyme is formed, which can initiate transcription. It depends on Mg(2+) as a cofactor. Zn(2+) serves as cofactor.

The catalysed reaction is RNA(n) + a ribonucleoside 5'-triphosphate = RNA(n+1) + diphosphate. Functionally, DNA-dependent RNA polymerase catalyzes the transcription of DNA into RNA using the four ribonucleoside triphosphates as substrates. This chain is DNA-directed RNA polymerase subunit beta', found in Desulforamulus reducens (strain ATCC BAA-1160 / DSM 100696 / MI-1) (Desulfotomaculum reducens).